A 383-amino-acid chain; its full sequence is Succinyl-diaminopimelate desuccinylase (383 aa).

Histidine 74 contributes to the Zn(2+) binding site. Aspartate 76 is an active-site residue. Aspartate 107 is a binding site for Zn(2+). Glutamate 141 acts as the Proton acceptor in catalysis. The Zn(2+) site is built by glutamate 142, glutamate 170, and histidine 356.

This sequence belongs to the peptidase M20A family. DapE subfamily. In terms of assembly, homodimer. Zn(2+) is required as a cofactor. Co(2+) serves as cofactor.

The enzyme catalyses N-succinyl-(2S,6S)-2,6-diaminopimelate + H2O = (2S,6S)-2,6-diaminopimelate + succinate. The protein operates within amino-acid biosynthesis; L-lysine biosynthesis via DAP pathway; LL-2,6-diaminopimelate from (S)-tetrahydrodipicolinate (succinylase route): step 3/3. Catalyzes the hydrolysis of N-succinyl-L,L-diaminopimelic acid (SDAP), forming succinate and LL-2,6-diaminopimelate (DAP), an intermediate involved in the bacterial biosynthesis of lysine and meso-diaminopimelic acid, an essential component of bacterial cell walls. This Ralstonia nicotianae (strain ATCC BAA-1114 / GMI1000) (Ralstonia solanacearum) protein is Succinyl-diaminopimelate desuccinylase.